The chain runs to 225 residues: GrpE protein homolog 2, mitochondrial (225 aa).

Residues 1–32 (MAVRSLWACRLRVQRLLAWSAAWESKGWPLPF) constitute a mitochondrion transit peptide. At Lys142 the chain carries N6-acetyllysine.

It belongs to the GrpE family. Probable component of the PAM complex at least composed of a mitochondrial HSP70 protein, GRPEL1 or GRPEL2, TIMM44, TIMM16/PAM16 and TIMM14/DNAJC19.

It localises to the mitochondrion matrix. Functionally, essential component of the PAM complex, a complex required for the translocation of transit peptide-containing proteins from the inner membrane into the mitochondrial matrix in an ATP-dependent manner. Seems to control the nucleotide-dependent binding of mitochondrial HSP70 to substrate proteins. Stimulates ATPase activity of mt-HSP70. May also serve to modulate the interconversion of oligomeric (inactive) and monomeric (active) forms of mt-HSP70. This Pongo abelii (Sumatran orangutan) protein is GrpE protein homolog 2, mitochondrial (GRPEL2).